Reading from the N-terminus, the 412-residue chain is Serine--tRNA ligase (412 aa).

Residue 228–230 (TAE) coordinates L-serine. 259–261 (RKE) provides a ligand contact to ATP. Glu-282 is a binding site for L-serine. Residue 346 to 349 (EISS) coordinates ATP. Ser-380 is a binding site for L-serine.

This sequence belongs to the class-II aminoacyl-tRNA synthetase family. Type-1 seryl-tRNA synthetase subfamily. Homodimer. The tRNA molecule binds across the dimer.

It localises to the cytoplasm. It catalyses the reaction tRNA(Ser) + L-serine + ATP = L-seryl-tRNA(Ser) + AMP + diphosphate + H(+). The catalysed reaction is tRNA(Sec) + L-serine + ATP = L-seryl-tRNA(Sec) + AMP + diphosphate + H(+). Its pathway is aminoacyl-tRNA biosynthesis; selenocysteinyl-tRNA(Sec) biosynthesis; L-seryl-tRNA(Sec) from L-serine and tRNA(Sec): step 1/1. Its function is as follows. Catalyzes the attachment of serine to tRNA(Ser). Is also able to aminoacylate tRNA(Sec) with serine, to form the misacylated tRNA L-seryl-tRNA(Sec), which will be further converted into selenocysteinyl-tRNA(Sec). The polypeptide is Serine--tRNA ligase (Aliarcobacter butzleri (strain RM4018) (Arcobacter butzleri)).